The sequence spans 364 residues: Peptide chain release factor 1 (364 aa).

Gln238 carries the N5-methylglutamine modification. Over residues 286-297 (DEKRQAEEDSTR) the composition is skewed to basic and acidic residues. The tract at residues 286–315 (DEKRQAEEDSTRRNLVGSGDRSERIRTYNY) is disordered.

The protein belongs to the prokaryotic/mitochondrial release factor family. In terms of processing, methylated by PrmC. Methylation increases the termination efficiency of RF1.

It is found in the cytoplasm. Its function is as follows. Peptide chain release factor 1 directs the termination of translation in response to the peptide chain termination codons UAG and UAA. The sequence is that of Peptide chain release factor 1 from Idiomarina loihiensis (strain ATCC BAA-735 / DSM 15497 / L2-TR).